A 79-amino-acid chain; its full sequence is Small ribosomal subunit protein bS18 (79 aa).

The protein belongs to the bacterial ribosomal protein bS18 family. In terms of assembly, part of the 30S ribosomal subunit. Forms a tight heterodimer with protein bS6.

Functionally, binds as a heterodimer with protein bS6 to the central domain of the 16S rRNA, where it helps stabilize the platform of the 30S subunit. The chain is Small ribosomal subunit protein bS18 from Rhodopseudomonas palustris (strain BisB5).